The following is a 150-amino-acid chain: Large ribosomal subunit protein bL9 (150 aa).

Belongs to the bacterial ribosomal protein bL9 family.

Binds to the 23S rRNA. This chain is Large ribosomal subunit protein bL9, found in Alcanivorax borkumensis (strain ATCC 700651 / DSM 11573 / NCIMB 13689 / SK2).